The chain runs to 476 residues: Neuropeptide-like precursor 1 (476 aa).

An N-terminal signal peptide occupies residues 1 to 34; sequence MNDAGASIGRHRGCLLLFVALAVAFSSYVEQVES. The residue at position 133 (Val133) is a Valine amide. Propeptides lie at residues 160–232 and 259–476; these read DEAT…NSYF and YVMP…RKNQ. Disordered regions lie at residues 275 to 298 and 360 to 385; these read QNDI…DGEV and PEVE…SHPT. Residues 286-297 show a composition bias toward acidic residues; it reads DDDDDDDDDDGE.

In terms of tissue distribution, neuropeptide-like precursor 1-1: Expressed in antennal lobe (AL), corpora cardiaca (CC), corpora allata (CA) and gnathal ganglion (GNG) (at protein level). Expression in AL detected in all animals, in GNG in most animals, expression in CC and CA in few animals (at protein level). Neuropeptide-like precursor 1-2: Expressed in antennal lobe (AL), corpora cardiaca (CC), corpora allata (CA) and gnathal ganglion (GNG) (at protein level). Expression in AL detected in all animals, in GNG in some animals, expression in CC and CA in few animals (at protein level). Neuropeptide-like precursor 1-3: Not expressed in antennal lobe (AL), corpora cardiaca (CC), corpora allata (CA) and gnathal ganglion (GNG) (at protein level). Neuropeptide-like precursor 1-4: Expressed in antennal lobe (AL) and gnathal ganglion (GNG) (at protein level). Expression in AL detected in most animals, in GNG in some animals (at protein level). Not expressed in CC and CA (at protein level). YRVamide: Expressed in antennal lobe (AL), corpora cardiaca (CC), corpora allata (CA) and gnathal ganglion (GNG) (at protein level). Expression in AL and GNG detected in most animals, expression in CC and CA in few animals (at protein level). Extended YRVamide: Expressed in antennal lobe (AL) and gnathal ganglion (GNG) (at protein level). Expression in AL detected in most animals, in GNG in some animals (at protein level). Not expressed in corpora cardiaca (CC) and corpora allata (CA) (at protein level). Neuropeptide-like precursor 1-6: Expressed in antennal lobe (AL), corpora cardiaca (CC), corpora allata (CA) and gnathal ganglion (GNG) (at protein level). Expression in GNG detected in all animals, expression in AL in most animals, in CC and CA in few animals (at protein level). Neuropeptide-like precursor 1-6(1-11): Expressed in antennal lobe (AL) and gnathal ganglion (GNG) in most animals (at protein level). Not expressed in corpora cardiaca (CC) and corpora allata (CA) (at protein level). Neuropeptide-like precursor 1-9: Expressed in antennal lobe (AL) and gnathal ganglion (GNG) (at protein level). Expression in AL detected in all animals in GNG in most (at protein level). Not expressed in corpora cardiaca (CC) and corpora allata (CA) (at protein level).

Its subcellular location is the secreted. This chain is Neuropeptide-like precursor 1, found in Agrotis ipsilon (Black cutworm moth).